Consider the following 79-residue polypeptide: Small ribosomal subunit protein bS18B (79 aa).

Belongs to the bacterial ribosomal protein bS18 family. In terms of assembly, part of the 30S ribosomal subunit. Forms a tight heterodimer with protein bS6.

Its function is as follows. Binds as a heterodimer with protein bS6 to the central domain of the 16S rRNA, where it helps stabilize the platform of the 30S subunit. The protein is Small ribosomal subunit protein bS18B of Saccharopolyspora erythraea (strain ATCC 11635 / DSM 40517 / JCM 4748 / NBRC 13426 / NCIMB 8594 / NRRL 2338).